A 356-amino-acid chain; its full sequence is 4-hydroxy-3-methylbut-2-en-1-yl diphosphate synthase (flavodoxin) (356 aa).

Cys-264, Cys-267, Cys-299, and Glu-306 together coordinate [4Fe-4S] cluster.

It belongs to the IspG family. [4Fe-4S] cluster serves as cofactor.

It carries out the reaction (2E)-4-hydroxy-3-methylbut-2-enyl diphosphate + oxidized [flavodoxin] + H2O + 2 H(+) = 2-C-methyl-D-erythritol 2,4-cyclic diphosphate + reduced [flavodoxin]. The protein operates within isoprenoid biosynthesis; isopentenyl diphosphate biosynthesis via DXP pathway; isopentenyl diphosphate from 1-deoxy-D-xylulose 5-phosphate: step 5/6. Its function is as follows. Converts 2C-methyl-D-erythritol 2,4-cyclodiphosphate (ME-2,4cPP) into 1-hydroxy-2-methyl-2-(E)-butenyl 4-diphosphate. This Natranaerobius thermophilus (strain ATCC BAA-1301 / DSM 18059 / JW/NM-WN-LF) protein is 4-hydroxy-3-methylbut-2-en-1-yl diphosphate synthase (flavodoxin).